Reading from the N-terminus, the 149-residue chain is Calmodulin (149 aa).

The residue at position 2 (Ala2) is an N-acetylalanine. 4 consecutive EF-hand domains span residues 8–43 (EQIA…LGQN), 44–79 (PTEA…KMKD), 81–116 (DSEE…LGEK), and 117–149 (LTDE…MTNK). The Ca(2+) site is built by Asp21, Asp23, Asp25, Thr27, Glu32, Asp57, Asp59, Asn61, Thr63, Glu68, Asp94, Asp96, Asn98, and Glu105. Lys116 carries the N6,N6,N6-trimethyllysine modification. Ca(2+) is bound by residues Asp130, Asp132, Asp134, Gln136, and Glu141.

It belongs to the calmodulin family.

In terms of biological role, calmodulin mediates the control of a large number of enzymes, ion channels and other proteins by Ca(2+). Among the enzymes to be stimulated by the calmodulin-Ca(2+) complex are a number of protein kinases and phosphatases. In Ciona intestinalis (Transparent sea squirt), this protein is Calmodulin.